The chain runs to 185 residues: Ribosome maturation factor RimP (185 aa).

The tract at residues 162–185 (VRLERAADGAPERGGDRGDTEESR) is disordered.

It belongs to the RimP family.

The protein resides in the cytoplasm. Its function is as follows. Required for maturation of 30S ribosomal subunits. This Saccharopolyspora erythraea (strain ATCC 11635 / DSM 40517 / JCM 4748 / NBRC 13426 / NCIMB 8594 / NRRL 2338) protein is Ribosome maturation factor RimP.